Here is a 307-residue protein sequence, read N- to C-terminus: GTPase Era (307 aa).

One can recognise an Era-type G domain in the interval 7–181 (RCGWVALMGP…VELIRKKLPK (175 aa)). Residues 15-22 (GPPNAGKS) form a G1 region. 15–22 (GPPNAGKS) is a binding site for GTP. The tract at residues 41–45 (QTTRN) is G2. Residues 62–65 (DTPG) form a G3 region. Residues 62 to 66 (DTPGL) and 130 to 133 (NKVD) contribute to the GTP site. Positions 130–133 (NKVD) are G4. Residues 160-162 (ISA) form a G5 region. Residues 212–290 (LRQEVPYSVA…HLELWVKVRE (79 aa)) enclose the KH type-2 domain.

It belongs to the TRAFAC class TrmE-Era-EngA-EngB-Septin-like GTPase superfamily. Era GTPase family. Monomer.

It is found in the cytoplasm. Its subcellular location is the cell inner membrane. In terms of biological role, an essential GTPase that binds both GDP and GTP, with rapid nucleotide exchange. Plays a role in 16S rRNA processing and 30S ribosomal subunit biogenesis and possibly also in cell cycle regulation and energy metabolism. This Desulfovibrio desulfuricans (strain ATCC 27774 / DSM 6949 / MB) protein is GTPase Era.